Consider the following 324-residue polypeptide: Meiotic recombination protein DLH1 (324 aa).

112–119 (GEFRCGKT) is an ATP binding site. A dsDNA-binding site is contributed by R214. SsDNA-binding residues include R214, Y217, R220, R226, and R296. R220 and R226 together coordinate dsDNA.

Belongs to the RecA family. DMC1 subfamily. Double stacked ring-shaped homooctamer.

The protein localises to the nucleus. Its function is as follows. Required for meiotic recombination, synaptonemal complex formation and cell cycle progression. The protein is Meiotic recombination protein DLH1 (DLH1) of Candida albicans (Yeast).